The following is a 1286-amino-acid chain: Protein patched (1286 aa).

The Cytoplasmic portion of the chain corresponds to 1–76; sequence MDRDSLPRVP…GSSVQKHAGK (76 aa). Residues 77 to 92 traverse the membrane as a helical segment; it reads VLFVAILVLSTFCVGL. At 93-427 the chain is on the extracellular side; that stretch reads KSAQIHSKVH…DDILAKFSHP (335 aa). Residues Asn142, Asn298, Asn335, and Asn388 are each glycosylated (N-linked (GlcNAc...) asparagine). The chain crosses the membrane as a helical span at residues 428–448; it reads SALSIVIGVAVTVLYAFCTLL. The SSD domain occupies 428–583; it reads SALSIVIGVA…LLVFPAMISL (156 aa). At 449-465 the chain is on the cytoplasmic side; sequence RWRDPVRGQSSVGVAGV. The helical transmembrane segment at 466-486 threads the bilayer; that stretch reads LLMCFSTAAGLGLSALLGIVF. The Extracellular portion of the chain corresponds to 487–492; the sequence is NAASTQ. Residues 493–511 traverse the membrane as a helical segment; it reads VVPFLALGLGVDHIFMLTA. The Cytoplasmic segment spans residues 512–532; it reads AYAESNRREQTKLILKKVGPS. A helical membrane pass occupies residues 533-553; it reads ILFSACSTAGSFFAAAFIPVP. Residues 554–562 are Extracellular-facing; that stretch reads ALKVFCLQA. A helical transmembrane segment spans residues 563–583; it reads AIVMCSNLAAALLVFPAMISL. Residues 584–677 are Cytoplasmic-facing; it reads DLRRRTAGRA…QHYTPFLMRS (94 aa). Residues 678–699 traverse the membrane as a helical segment; that stretch reads WVKFLTVMGFLAALISSLYAST. Residues 700 to 931 are Extracellular-facing; sequence RLQDGLDIID…IRDLSVKYEG (232 aa). Asn807 carries N-linked (GlcNAc...) asparagine glycosylation. A helical membrane pass occupies residues 932 to 952; that stretch reads FGLPNYPSGIPFIFWEQYMTL. At 953–955 the chain is on the cytoplasmic side; that stretch reads RSS. A helical membrane pass occupies residues 956 to 976; the sequence is LAMILACVLLAALVLVSLLLL. Residues 977-1007 lie on the Extracellular side of the membrane; the sequence is SVWAAVLVILSVLASLAQIFGAMTLLGIKLS. The helical transmembrane segment at 1008 to 1028 threads the bilayer; that stretch reads AIPAVILILSVGMMLCFNVLI. Topologically, residues 1029 to 1056 are cytoplasmic; that stretch reads SLGFMTSVGNRQRRVQLSMQMSLGPLVH. A helical membrane pass occupies residues 1057–1077; it reads GMLTSGVAVFMLSTSPFEFVI. At 1078–1082 the chain is on the extracellular side; that stretch reads RHFCW. A helical membrane pass occupies residues 1083-1103; that stretch reads LLLVVLCVGACNSLLVFPILL. The Cytoplasmic portion of the chain corresponds to 1104–1286; that stretch reads SMVGPEAELV…RAVRSYNFTS (183 aa). The disordered stretch occupies residues 1116-1237; that stretch reads EHPDRISTPS…PPPFPTAYPP (122 aa). 2 stretches are compositionally biased toward polar residues: residues 1141–1152 and 1165–1191; these read VQGSRSSRGSCQ and PSLTTITEEPQSWKSSNSSIQMPNDWT. The segment covering 1199–1216 has biased composition (low complexity); sequence PASYAAPPPAYHKAAAQQ. The segment covering 1224-1235 has biased composition (pro residues); sequence PTTPPPPFPTAY.

Belongs to the patched family. In terms of assembly, interacts (via C-terminal cytoplasmic region) with CG5504/l(2)tid; the interaction is probably direct. Interacts with hh/hedgehog.

It is found in the membrane. Segmentation polarity protein. Acts as a receptor for the hedgehog protein (hh). Associates with the smoothened protein (SMO) to transduce the hedgehog signal leading to the activation of wingless, decapentaplegic and patched itself. Participates in cell interactions that establish pattern within the segment and the imaginal disks during development. In the absence of HH, represses the constitutive signaling activity of smo through fused (FU). The chain is Protein patched from Drosophila melanogaster (Fruit fly).